The chain runs to 201 residues: 3-isopropylmalate dehydratase small subunit (201 aa).

Belongs to the LeuD family. LeuD type 1 subfamily. Heterodimer of LeuC and LeuD.

It catalyses the reaction (2R,3S)-3-isopropylmalate = (2S)-2-isopropylmalate. It participates in amino-acid biosynthesis; L-leucine biosynthesis; L-leucine from 3-methyl-2-oxobutanoate: step 2/4. Its function is as follows. Catalyzes the isomerization between 2-isopropylmalate and 3-isopropylmalate, via the formation of 2-isopropylmaleate. The polypeptide is 3-isopropylmalate dehydratase small subunit (Methylorubrum extorquens (strain CM4 / NCIMB 13688) (Methylobacterium extorquens)).